We begin with the raw amino-acid sequence, 274 residues long: tRNA pseudouridine synthase A (274 aa).

The Nucleophile role is filled by aspartate 60. Tyrosine 118 is a substrate binding site.

The protein belongs to the tRNA pseudouridine synthase TruA family. In terms of assembly, homodimer.

The enzyme catalyses uridine(38/39/40) in tRNA = pseudouridine(38/39/40) in tRNA. Formation of pseudouridine at positions 38, 39 and 40 in the anticodon stem and loop of transfer RNAs. The sequence is that of tRNA pseudouridine synthase A from Picosynechococcus sp. (strain ATCC 27264 / PCC 7002 / PR-6) (Agmenellum quadruplicatum).